The following is a 191-amino-acid chain: Orotate phosphoribosyltransferase (191 aa).

Position 114–122 (114–122) interacts with 5-phospho-alpha-D-ribose 1-diphosphate; the sequence is EDVITTGGS. 2 residues coordinate orotate: Thr118 and Arg146.

This sequence belongs to the purine/pyrimidine phosphoribosyltransferase family. PyrE subfamily. Homodimer. Mg(2+) is required as a cofactor.

The catalysed reaction is orotidine 5'-phosphate + diphosphate = orotate + 5-phospho-alpha-D-ribose 1-diphosphate. The protein operates within pyrimidine metabolism; UMP biosynthesis via de novo pathway; UMP from orotate: step 1/2. Its function is as follows. Catalyzes the transfer of a ribosyl phosphate group from 5-phosphoribose 1-diphosphate to orotate, leading to the formation of orotidine monophosphate (OMP). This Caldicellulosiruptor saccharolyticus (strain ATCC 43494 / DSM 8903 / Tp8T 6331) protein is Orotate phosphoribosyltransferase.